Here is a 332-residue protein sequence, read N- to C-terminus: Anthranilate phosphoribosyltransferase (332 aa).

Residues Gly78, 81-82 (GD), Ser86, 88-91 (NIST), 106-114 (KHGNKSITS), and Ser118 contribute to the 5-phospho-alpha-D-ribose 1-diphosphate site. Gly78 contributes to the anthranilate binding site. Residue Ser90 coordinates Mg(2+). An anthranilate-binding site is contributed by Asn109. Arg163 is an anthranilate binding site. Mg(2+) is bound by residues Asp222 and Glu223.

This sequence belongs to the anthranilate phosphoribosyltransferase family. As to quaternary structure, homodimer. Requires Mg(2+) as cofactor.

It carries out the reaction N-(5-phospho-beta-D-ribosyl)anthranilate + diphosphate = 5-phospho-alpha-D-ribose 1-diphosphate + anthranilate. Its pathway is amino-acid biosynthesis; L-tryptophan biosynthesis; L-tryptophan from chorismate: step 2/5. In terms of biological role, catalyzes the transfer of the phosphoribosyl group of 5-phosphorylribose-1-pyrophosphate (PRPP) to anthranilate to yield N-(5'-phosphoribosyl)-anthranilate (PRA). This is Anthranilate phosphoribosyltransferase from Staphylococcus aureus (strain USA300).